The sequence spans 106 residues: UPF0145 protein VV2_1464 (106 aa).

It belongs to the UPF0145 family.

This chain is UPF0145 protein VV2_1464, found in Vibrio vulnificus (strain CMCP6).